The following is a 290-amino-acid chain: ADP-dependent (S)-NAD(P)H-hydrate dehydratase (290 aa).

The 274-residue stretch at 5–278 (NQTLLEKVII…RYLPKIMKII (274 aa)) folds into the YjeF C-terminal domain. (6S)-NADPHX contacts are provided by A40, G103, and H152. AMP is bound at residue G218. D219 is a (6S)-NADPHX binding site.

This sequence belongs to the NnrD/CARKD family. As to quaternary structure, homotetramer. Mg(2+) is required as a cofactor.

It carries out the reaction (6S)-NADHX + ADP = AMP + phosphate + NADH + H(+). The enzyme catalyses (6S)-NADPHX + ADP = AMP + phosphate + NADPH + H(+). Catalyzes the dehydration of the S-form of NAD(P)HX at the expense of ADP, which is converted to AMP. Together with NAD(P)HX epimerase, which catalyzes the epimerization of the S- and R-forms, the enzyme allows the repair of both epimers of NAD(P)HX, a damaged form of NAD(P)H that is a result of enzymatic or heat-dependent hydration. This chain is ADP-dependent (S)-NAD(P)H-hydrate dehydratase, found in Streptococcus pneumoniae (strain ATCC BAA-255 / R6).